The chain runs to 442 residues: Cell division protein FtsZ (442 aa).

Residues 18–22 (GGGVN), 105–107 (GTG), Glu136, Arg140, and Asp184 each bind GTP. Positions 329–341 (AAPAAEPVQQQVP) are enriched in low complexity. The interval 329 to 442 (AAPAAEPVQQ…DDLDVPSFLQ (114 aa)) is disordered. 2 stretches are compositionally biased toward basic and acidic residues: residues 349–362 (PEKE…REEN) and 390–431 (NDRD…RDDR).

The protein belongs to the FtsZ family. Homodimer. Polymerizes to form a dynamic ring structure in a strictly GTP-dependent manner. Interacts directly with several other division proteins.

It is found in the cytoplasm. Essential cell division protein that forms a contractile ring structure (Z ring) at the future cell division site. The regulation of the ring assembly controls the timing and the location of cell division. One of the functions of the FtsZ ring is to recruit other cell division proteins to the septum to produce a new cell wall between the dividing cells. Binds GTP and shows GTPase activity. The polypeptide is Cell division protein FtsZ (Corynebacterium glutamicum (strain ATCC 13032 / DSM 20300 / JCM 1318 / BCRC 11384 / CCUG 27702 / LMG 3730 / NBRC 12168 / NCIMB 10025 / NRRL B-2784 / 534)).